The primary structure comprises 243 residues: MKITWFGHAAFRLDFADKAVLIDPFFTGNPSFNSTVEEAARGVTHILLTHGHSDHVGDTVSLVEDAADASRTLPVVANPEICAYLAAKGAGNAGQMMNTGGSLDCGGFTVTMVRADHSSGGPGSPSEYLGNPTGLIIRAPGEPTVWHMGDTDIYSDMALMCEIHRPKVVFIPIGDRFTMGPAVAALAVKRFLPGVEVVVPCHYGSFPILVQDASFFAQALADHPVKVVVPGPGGSFDANITPA.

It belongs to the UPF0173 family.

The polypeptide is UPF0173 metal-dependent hydrolase Xaut_3786 (Xanthobacter autotrophicus (strain ATCC BAA-1158 / Py2)).